Reading from the N-terminus, the 132-residue chain is ATP synthase epsilon chain (132 aa).

It belongs to the ATPase epsilon chain family. In terms of assembly, F-type ATPases have 2 components, CF(1) - the catalytic core - and CF(0) - the membrane proton channel. CF(1) has five subunits: alpha(3), beta(3), gamma(1), delta(1), epsilon(1). CF(0) has three main subunits: a, b and c.

Its subcellular location is the cell membrane. Produces ATP from ADP in the presence of a proton gradient across the membrane. In Bacillus sp. (strain PS3), this protein is ATP synthase epsilon chain (atpC).